A 331-amino-acid chain; its full sequence is Tetraspanin-10 (331 aa).

Positions methionine 1 to proline 34 are disordered. Over methionine 1–tyrosine 76 the chain is Cytoplasmic. The chain crosses the membrane as a helical span at residues leucine 77–leucine 97. At tryptophan 98 to leucine 120 the chain is on the extracellular side. Residues methionine 121 to phenylalanine 141 traverse the membrane as a helical segment. Residues cysteine 142–cysteine 152 lie on the Cytoplasmic side of the membrane. A helical transmembrane segment spans residues glycine 153–tryptophan 173. Topologically, residues lysine 174 to leucine 331 are extracellular. Cystine bridges form between cysteine 210-cysteine 277, cysteine 211-cysteine 241, cysteine 227-cysteine 235, and cysteine 242-cysteine 256. Asparagine 226 carries an N-linked (GlcNAc...) asparagine glycan.

This sequence belongs to the tetraspanin (TM4SF) family. Interacts with ADAM10.

Its subcellular location is the cell membrane. Part of TspanC8 subgroup, composed of 6 members that interact with the transmembrane metalloprotease ADAM10. This interaction is required for ADAM10 exit from the endoplasmic reticulum and for enzymatic maturation and trafficking to the cell surface as well as substrate specificity. Different TspanC8/ADAM10 complexes have distinct substrates. This chain is Tetraspanin-10 (Tspan10), found in Mus musculus (Mouse).